Reading from the N-terminus, the 376-residue chain is Crh-like protein 4 (376 aa).

An N-terminal signal peptide occupies residues 1-21 (MFPKIFLTAATALLSAKSTFA). Residues 22-229 (QTYSSCNPLF…WARGPTDYSN (208 aa)) form the GH16 domain. The cysteines at positions 27 and 35 are disulfide-linked. Glutamate 119 serves as the catalytic Nucleophile. Glutamate 123 functions as the Proton donor in the catalytic mechanism. Residues glutamate 123, lysine 202, tryptophan 206, and threonine 217 each contribute to the chitin site. The GPI-anchor amidated serine moiety is linked to residue serine 346. A propeptide spans 347-376 (ASPINISRINPLLLCGPFTFFFFAAIRRWP) (removed in mature form). Asparagine 351 carries an N-linked (GlcNAc...) asparagine glycan.

This sequence belongs to the glycosyl hydrolase 16 family. CRH1 subfamily.

The protein resides in the cell membrane. It catalyses the reaction Random endo-hydrolysis of N-acetyl-beta-D-glucosaminide (1-&gt;4)-beta-linkages in chitin and chitodextrins.. Its function is as follows. Dual chitinase/transglycosylase that plays a role in cell wall architecture. Chitinase and transglycosylase activities are coupled. Required for the polysaccharide cross-linking at the septa and the cell wall. More specifically, transfers chitin to 1,6-beta-glucan in the cell wall. The sequence is that of Crh-like protein 4 from Botryotinia fuckeliana (strain B05.10) (Noble rot fungus).